A 103-amino-acid polypeptide reads, in one-letter code: ATP synthase subunit f, mitochondrial (103 aa).

The N-terminal 6 residues, 1–6, are a transit peptide targeting the mitochondrion; sequence MIFRRQ.

F-type ATP synthases have 2 components, the catalytic core F(1) and the membrane-embedded component F(0), linked together by a central stalk and a peripheral stalk. The central stalk, also called rotor shaft, is often seen as part of F(1). The peripheral stalk is seen as part of F(0). F(0) contains the membrane channel next to the rotor. F-type ATP synthases form dimers but each monomer functions independently in ATP generation. The dimer consists of 17 different polypeptides: ATP1 (subunit alpha, 3 molecules per monomer, part of F(1)), ATP2 (subunit beta, 3 copies per monomer, part of F(1)), ATP3 (subunit gamma, part of the central stalk), ATP4 (subunit b, part of the peripheral stalk), ATP5/OSCP (subunit 5/OSCP, part of the peripheral stalk), ATP6 (subunit a, part of the peripheral stalk), ATP7 (subunit d, part of the peripheral stalk), ATP8 (subunit 8, part of the peripheral stalk), OLI1 (subunit c, part of the rotor, 10 molecules per monomer), ATP14 (subunit h, part of the peripheral stalk), ATP15 (subunit epsilon, part of the central stalk), ATP16 (subunit delta, part of the central stalk), ATP17 (subunit f, part of the peripheral stalk), ATP18 (subunit i/j, part of the peripheral stalk), ATP19 (subunit k, dimer-specific, at interface between monomers), ATP20 (subunit g, at interface between monomers), TIM11 (subunit e, at interface between monomers).

Its subcellular location is the mitochondrion inner membrane. Mitochondrial membrane ATP synthase (F(1)F(0) ATP synthase or Complex V) produces ATP from ADP in the presence of a proton gradient across the membrane which is generated by electron transport complexes of the respiratory chain. F-type ATP synthases consist of two structural domains, F(1) - containing the extramembraneous catalytic core, and F(0) - containing the membrane proton channel, linked together by a central stalk and a peripheral stalk. During catalysis, ATP synthesis in the catalytic domain of F(1) is coupled via a rotary mechanism of the central stalk subunits to proton translocation. Part of the complex F(0) domain. Minor subunit located with subunit a/ATP6 in the membrane. This is ATP synthase subunit f, mitochondrial from Yarrowia lipolytica (strain CLIB 122 / E 150) (Yeast).